We begin with the raw amino-acid sequence, 97 residues long: Defensin-A2 (97 aa).

An N-terminal signal peptide occupies residues 1-19; the sequence is MRTLSLLLALLFLAAQTLA. Residues 20–61 constitute a propeptide that is removed on maturation; that stretch reads QPIDEGAEEVITEEPEITETQDPTTIMLIERGIGGDSTDATR. Cystine bridges form between cysteine 66/cysteine 93, cysteine 68/cysteine 82, and cysteine 72/cysteine 92. Residues 96-97 constitute a propeptide that is removed on maturation; sequence TS.

It belongs to the alpha-defensin family. Highly expressed in intestine, expressed at lower levels in spleen, and at very low levels in kidney and lung.

Its subcellular location is the secreted. Functionally, has antimicrobial activity. This Ornithorhynchus anatinus (Duckbill platypus) protein is Defensin-A2.